The sequence spans 551 residues: Probable inorganic carbon transporter subunit DabB2 (551 aa).

14 helical membrane-spanning segments follow: residues 6–26, 42–62, 65–85, 86–106, 132–152, 187–207, 217–237, 252–272, 284–304, 321–341, 374–394, 404–424, 434–454, and 469–489; these read SHTT…AAVI, VQWT…SFLF, QQNL…LALS, IQVN…LSVI, GFFL…AIIA, LLLA…FSQI, LSIA…LKSA, PTPV…IIVL, ALLL…LVML, LGFM…LHLV, VVAW…IAAA, MLPA…LKAL, VAAG…EVFI, and PLLD…VAWL.

It belongs to the inorganic carbon transporter (TC 9.A.2) DabB family. In terms of assembly, forms a complex with DabA2, possibly a heterodimer.

Its subcellular location is the cell inner membrane. Its activity is regulated as follows. Uptake of inorganic carbon by cells in the presence of thiosulphate is fully inhibited by the uncouplers carbonyl cyanide m-chlorophenyl hydrazone (CCCP), carbonyl cyanide p-trifluoromethoxyphenyl hydrazone (FCCP), S13 or SF6847. Not inhibited by the ATPase inhibitor N,N-dicyclohexylcarbodiimide (DCCD). Inorganic carbon uptake is inhibited by the ionophore carbonyl cyanide m-chlorophenyl hydrazone (CCCP), suggesting uptake is coupled to a cation gradient. In terms of biological role, part of an energy-coupled inorganic carbon pump; its substrate may be carbon dioxide. Expression of both dabA2 and dabB2 (DAB2) restores growth in ambient air to E.coli deleted of its carbonic anhydrase genes (called CAfree, deletion of 'can' and 'cynT'); neither dabA2 or dabB2 alone is sufficient. Rescue is pH-independent, suggesting it transports CO(2) and not carbonate ions. Together the genes allow greater than normal uptake of inorganic carbon by E.coli. Uptake of carbon dioxide rather than bicarbonate has been suggested based on kinetic calculations. The polypeptide is Probable inorganic carbon transporter subunit DabB2 (Halothiobacillus neapolitanus (strain ATCC 23641 / c2) (Thiobacillus neapolitanus)).